The primary structure comprises 71 residues: Brevinin-1V (71 aa).

Residues 1-22 (MFTLKKSLLLLFFLGTINLSLC) form the signal peptide. Positions 23 to 45 (EQERDADEEERRDDSEERDIEVE) are excised as a propeptide. Cys-65 and Cys-71 are oxidised to a cystine.

It belongs to the frog skin active peptide (FSAP) family. Brevinin subfamily. Expressed by the skin glands.

Its subcellular location is the secreted. Has antimicrobial activity against Gram-positive bacteria and fungi but has weak or no activity against a range of Gram-negative bacteria except P.faecalis. Active against the Gram-positive bacteria E.faecium 091299 (MIC=37.5 uM), S.aureus ATCC 25923 (MIC=2.4 uM), S.carnosus KHS (MIC=19 uM), B.licheniformis X39 (MIC=2.4 uM) and R.rhodochrous X15 (MIC=1.2 uM) and a lower activity against E.faecalis 981 (MIC=75 uM). Active against the Gram-negative bacterium P.faecalis X29 (MIC=9.5 uM) is virtually inactive against E.coli ATCC 25922 (MIC=150 uM), and inactive against P.aeruginosa and S.typhi. Has antifungal activity against C.albicans ATCC 2002 (MIC=9.5 uM) and is also active against the slime mold 090223 (MIC=1.2 uM). Has low hemolytic activity against human erythrocytes (LC(50)=75 uM). This is Brevinin-1V from Odorrana hainanensis (Odor frog).